The chain runs to 342 residues: Probable dual-specificity RNA methyltransferase RlmN (342 aa).

Glu91 (proton acceptor) is an active-site residue. The Radical SAM core domain maps to 97–327; the sequence is YKHGNSICVS…TTIRREMGAD (231 aa). Cys104 and Cys332 are disulfide-bonded. [4Fe-4S] cluster-binding residues include Cys111, Cys115, and Cys118. Residues 158–159, Ser190, 213–215, and Asn289 contribute to the S-adenosyl-L-methionine site; these read GE and SLH. Cys332 serves as the catalytic S-methylcysteine intermediate.

Belongs to the radical SAM superfamily. RlmN family. Requires [4Fe-4S] cluster as cofactor.

It is found in the cytoplasm. It catalyses the reaction adenosine(2503) in 23S rRNA + 2 reduced [2Fe-2S]-[ferredoxin] + 2 S-adenosyl-L-methionine = 2-methyladenosine(2503) in 23S rRNA + 5'-deoxyadenosine + L-methionine + 2 oxidized [2Fe-2S]-[ferredoxin] + S-adenosyl-L-homocysteine. The catalysed reaction is adenosine(37) in tRNA + 2 reduced [2Fe-2S]-[ferredoxin] + 2 S-adenosyl-L-methionine = 2-methyladenosine(37) in tRNA + 5'-deoxyadenosine + L-methionine + 2 oxidized [2Fe-2S]-[ferredoxin] + S-adenosyl-L-homocysteine. Specifically methylates position 2 of adenine 2503 in 23S rRNA and position 2 of adenine 37 in tRNAs. This is Probable dual-specificity RNA methyltransferase RlmN from Clostridium botulinum (strain Loch Maree / Type A3).